A 154-amino-acid chain; its full sequence is Deoxyuridine 5'-triphosphate nucleotidohydrolase (154 aa).

Substrate-binding positions include 64–66 (RSG), Asn77, 81–83 (TID), and Lys91.

Belongs to the dUTPase family. In terms of assembly, homotrimer. It depends on Mg(2+) as a cofactor.

It catalyses the reaction dUTP + H2O = dUMP + diphosphate + H(+). The protein operates within pyrimidine metabolism; dUMP biosynthesis; dUMP from dCTP (dUTP route): step 2/2. In terms of biological role, this enzyme is involved in nucleotide metabolism: it produces dUMP, the immediate precursor of thymidine nucleotides and it decreases the intracellular concentration of dUTP so that uracil cannot be incorporated into DNA. This chain is Deoxyuridine 5'-triphosphate nucleotidohydrolase, found in Mycobacterium sp. (strain JLS).